Here is a 998-residue protein sequence, read N- to C-terminus: Protein Smaug (998 aa).

Over residues 1 to 37 (MKYATGTDNAMTSGISGQTNSSNSASNEMQPTTSTPT) the composition is skewed to polar residues. Disordered stretches follow at residues 1 to 45 (MKYA…EATS), 50 to 69 (TATYANGNPNPSANPSQSQP), and 329 to 370 (LCPA…GSSS). Residues 329 to 338 (LCPASGSRSS) show a composition bias toward low complexity. Residues Ser-564 and Ser-575 each carry the phosphoserine modification. The segment at 583–763 (EFKPNYIKFH…KDLKFKLSKM (181 aa)) is interaction with cup. In terms of domain architecture, SAM spans 600 to 654 (GIGLWLKSLRLHKYIELFKNMTYEEMLLITEDFLQSVGVTKGASHKLALCIDKLK). Disordered regions lie at residues 773–892 (HVKP…MQQM) and 943–977 (NGSNDNLGLERNQQPQQQQQRKLSGGVSSAEQQPK). Polar residues-rich tracts occupy residues 801–822 (KSGSNDRINNRKNSNDMLNFSL) and 854–864 (HQPQYKSSSYP). At Ser-971 the chain carries Phosphoserine.

It belongs to the SMAUG family. In terms of assembly, interacts with oskar (osk). Binds to the 3'-UTR of nos. Interacts with cup, which in turn recruits eIF4-E, leading to an indirect interaction between smg and eIF4-E that prevents mRNA translation.

The protein localises to the cytoplasm. Translation regulator that binds to the 3'-UTR of specific mRNAs such as nanos (nos) and prevent their translation. Prevents translation of unlocalized nos in the bulk cytoplasm via the recruitment of cup. This is Protein Smaug from Drosophila sechellia (Fruit fly).